The chain runs to 397 residues: Elongation factor Tu (397 aa).

The 197-residue stretch at 10–206 folds into the tr-type G domain; that stretch reads KPHVNIGTIG…EVDAYIPTPE (197 aa). A G1 region spans residues 19–26; it reads GHVDHGKT. 19–26 is a GTP binding site; the sequence is GHVDHGKT. Thr-26 serves as a coordination point for Mg(2+). The segment at 60–64 is G2; sequence GITIN. The interval 81–84 is G3; the sequence is DCPG. GTP is bound by residues 81 to 85 and 136 to 139; these read DCPGH and NKAD. The tract at residues 136-139 is G4; sequence NKAD. The G5 stretch occupies residues 174–176; sequence SAL.

It belongs to the TRAFAC class translation factor GTPase superfamily. Classic translation factor GTPase family. EF-Tu/EF-1A subfamily. Monomer.

It localises to the cytoplasm. It carries out the reaction GTP + H2O = GDP + phosphate + H(+). In terms of biological role, GTP hydrolase that promotes the GTP-dependent binding of aminoacyl-tRNA to the A-site of ribosomes during protein biosynthesis. The sequence is that of Elongation factor Tu from Clostridium acetobutylicum (strain ATCC 824 / DSM 792 / JCM 1419 / IAM 19013 / LMG 5710 / NBRC 13948 / NRRL B-527 / VKM B-1787 / 2291 / W).